A 250-amino-acid chain; its full sequence is Acetylglutamate kinase (250 aa).

Substrate contacts are provided by residues 41–42 (GG), Arg-63, and Asn-156.

This sequence belongs to the acetylglutamate kinase family. ArgB subfamily.

It is found in the cytoplasm. The catalysed reaction is N-acetyl-L-glutamate + ATP = N-acetyl-L-glutamyl 5-phosphate + ADP. It participates in amino-acid biosynthesis; L-arginine biosynthesis; N(2)-acetyl-L-ornithine from L-glutamate: step 2/4. Its function is as follows. Catalyzes the ATP-dependent phosphorylation of N-acetyl-L-glutamate. This is Acetylglutamate kinase from Listeria monocytogenes serotype 4b (strain F2365).